We begin with the raw amino-acid sequence, 256 residues long: Probable S-methyl-5'-thioinosine phosphorylase (256 aa).

Phosphate-binding positions include Thr10 and 47–48 (RH). Met178 is a binding site for substrate. Thr179 lines the phosphate pocket. Residue 202-204 (NYA) coordinates substrate.

This sequence belongs to the PNP/MTAP phosphorylase family. MTAP subfamily. Homotrimer.

It catalyses the reaction S-methyl-5'-thioinosine + phosphate = 5-(methylsulfanyl)-alpha-D-ribose 1-phosphate + hypoxanthine. It participates in purine metabolism; purine nucleoside salvage. Its function is as follows. Catalyzes the reversible phosphorylation of S-methyl-5'-thioinosine (MTI) to hypoxanthine and 5-methylthioribose-1-phosphate. Involved in the breakdown of S-methyl-5'-thioadenosine (MTA), a major by-product of polyamine biosynthesis. Catabolism of (MTA) occurs via deamination to MTI and phosphorolysis to hypoxanthine. The protein is Probable S-methyl-5'-thioinosine phosphorylase of Methanopyrus kandleri (strain AV19 / DSM 6324 / JCM 9639 / NBRC 100938).